We begin with the raw amino-acid sequence, 901 residues long: Protein translocase subunit SecA (901 aa).

Residues Gln87, Gly105–Thr109, and Asp512 contribute to the ATP site. Cys885, Cys887, Cys896, and His897 together coordinate Zn(2+).

The protein belongs to the SecA family. In terms of assembly, monomer and homodimer. Part of the essential Sec protein translocation apparatus which comprises SecA, SecYEG and auxiliary proteins SecDF-YajC and YidC. Zn(2+) serves as cofactor.

It is found in the cell inner membrane. The protein resides in the cytoplasm. It carries out the reaction ATP + H2O + cellular proteinSide 1 = ADP + phosphate + cellular proteinSide 2.. In terms of biological role, part of the Sec protein translocase complex. Interacts with the SecYEG preprotein conducting channel. Has a central role in coupling the hydrolysis of ATP to the transfer of proteins into and across the cell membrane, serving both as a receptor for the preprotein-SecB complex and as an ATP-driven molecular motor driving the stepwise translocation of polypeptide chains across the membrane. This Salmonella paratyphi A (strain ATCC 9150 / SARB42) protein is Protein translocase subunit SecA.